The primary structure comprises 475 residues: tRNA-2-methylthio-N(6)-dimethylallyladenosine synthase (475 aa).

In terms of domain architecture, MTTase N-terminal spans 2–119 (AKLHITTWGC…LPEMINQIRS (118 aa)). Cys11, Cys48, Cys82, Cys156, Cys160, and Cys163 together coordinate [4Fe-4S] cluster. Positions 142-374 (KAEGPTAFVS…QQRINHQAMQ (233 aa)) constitute a Radical SAM core domain. A TRAM domain is found at 377 to 440 (RLMLGTEQRI…SNSLRGEVIR (64 aa)).

It belongs to the methylthiotransferase family. MiaB subfamily. As to quaternary structure, monomer. [4Fe-4S] cluster is required as a cofactor.

It is found in the cytoplasm. It catalyses the reaction N(6)-dimethylallyladenosine(37) in tRNA + (sulfur carrier)-SH + AH2 + 2 S-adenosyl-L-methionine = 2-methylsulfanyl-N(6)-dimethylallyladenosine(37) in tRNA + (sulfur carrier)-H + 5'-deoxyadenosine + L-methionine + A + S-adenosyl-L-homocysteine + 2 H(+). Functionally, catalyzes the methylthiolation of N6-(dimethylallyl)adenosine (i(6)A), leading to the formation of 2-methylthio-N6-(dimethylallyl)adenosine (ms(2)i(6)A) at position 37 in tRNAs that read codons beginning with uridine. The sequence is that of tRNA-2-methylthio-N(6)-dimethylallyladenosine synthase from Haemophilus ducreyi (strain 35000HP / ATCC 700724).